A 127-amino-acid polypeptide reads, in one-letter code: Large-conductance mechanosensitive channel (127 aa).

The next 2 membrane-spanning stretches (helical) occupy residues 14 to 34 (VLDLAVGVIIGGAFTGLVKSL) and 69 to 89 (GAFLNDVINFLITAFVVFLIV).

This sequence belongs to the MscL family. As to quaternary structure, homopentamer.

Its subcellular location is the cell membrane. Functionally, channel that opens in response to stretch forces in the membrane lipid bilayer. May participate in the regulation of osmotic pressure changes within the cell. The polypeptide is Large-conductance mechanosensitive channel (Leuconostoc mesenteroides subsp. mesenteroides (strain ATCC 8293 / DSM 20343 / BCRC 11652 / CCM 1803 / JCM 6124 / NCDO 523 / NBRC 100496 / NCIMB 8023 / NCTC 12954 / NRRL B-1118 / 37Y)).